Consider the following 160-residue polypeptide: Probable NADH dehydrogenase [ubiquinone] 1 beta subcomplex subunit 2, mitochondrial (160 aa).

Belongs to the complex I NDUFB2 subunit family. In terms of assembly, complex I is composed of 45 different subunits.

It is found in the mitochondrion inner membrane. Its function is as follows. Accessory subunit of the mitochondrial membrane respiratory chain NADH dehydrogenase (Complex I), that is believed not to be involved in catalysis. Complex I functions in the transfer of electrons from NADH to the respiratory chain. The immediate electron acceptor for the enzyme is believed to be ubiquinone. This Caenorhabditis briggsae protein is Probable NADH dehydrogenase [ubiquinone] 1 beta subcomplex subunit 2, mitochondrial.